Reading from the N-terminus, the 539-residue chain is Histone-arginine methyltransferase CARMER (539 aa).

An SAM-dependent MTase PRMT-type domain is found at 149 to 458 (ASQYFQFYGY…QSYDVTIDLH (310 aa)). S-adenosyl-L-methionine contacts are provided by Gln162, Arg171, Gly195, Glu217, Glu246, and Thr274. Residue Arg509 is modified to Asymmetric dimethylarginine; by autocatalysis.

It belongs to the class I-like SAM-binding methyltransferase superfamily. Protein arginine N-methyltransferase family. As to quaternary structure, homodimer. In terms of processing, the dimethylated protein is the major form.

It is found in the cytoplasm. It localises to the nucleus. It carries out the reaction L-arginyl-[protein] + 2 S-adenosyl-L-methionine = N(omega),N(omega)-dimethyl-L-arginyl-[protein] + 2 S-adenosyl-L-homocysteine + 2 H(+). Methylates (mono- and asymmetric dimethylation) the guanidino nitrogens of arginyl residues in proteins. May methylate histone H3 at 'Arg-17' and activate transcription via chromatin remodeling. This chain is Histone-arginine methyltransferase CARMER (Art4), found in Drosophila mojavensis (Fruit fly).